A 158-amino-acid chain; its full sequence is 3-hydroxyacyl-[acyl-carrier-protein] dehydratase FabZ (158 aa).

His-57 is a catalytic residue.

Belongs to the thioester dehydratase family. FabZ subfamily.

It localises to the cytoplasm. The enzyme catalyses a (3R)-hydroxyacyl-[ACP] = a (2E)-enoyl-[ACP] + H2O. Functionally, involved in unsaturated fatty acids biosynthesis. Catalyzes the dehydration of short chain beta-hydroxyacyl-ACPs and long chain saturated and unsaturated beta-hydroxyacyl-ACPs. This Anaeromyxobacter sp. (strain Fw109-5) protein is 3-hydroxyacyl-[acyl-carrier-protein] dehydratase FabZ.